Consider the following 317-residue polypeptide: Putative ribosomal protein uL10-like (317 aa).

Tyrosine 24 carries the post-translational modification Phosphotyrosine. Threonine 59 carries the post-translational modification Phosphothreonine. The interval 292-317 (AAAPAKVEAKEESEESDEDMGFGLFD) is disordered. Residue lysine 297 forms a Glycyl lysine isopeptide (Lys-Gly) (interchain with G-Cter in SUMO1); alternate linkage. Residue lysine 297 forms a Glycyl lysine isopeptide (Lys-Gly) (interchain with G-Cter in SUMO2); alternate linkage. Residues 302–311 (EESEESDEDM) show a composition bias toward acidic residues. A phosphoserine mark is found at serine 304 and serine 307.

The protein belongs to the universal ribosomal protein uL10 family. As to quaternary structure, P0 forms a pentameric complex by interaction with dimers of P1 and P2.

In terms of biological role, ribosomal protein P0 is the functional equivalent of E.coli protein L10. This is Putative ribosomal protein uL10-like (RPLP0P6) from Homo sapiens (Human).